Consider the following 884-residue polypeptide: E3 ubiquitin-protein ligase BRE1-like 1 (884 aa).

The interval 1–37 (MGSTGEPDRKRRLSSSVAPGGGAPVSPAKRLAVAPTS) is disordered. Residues 49–86 (YKNQKLSEQLEAHKFEYRALENKFAGLKEKQRTHNETL) adopt a coiled-coil conformation. Residues 107–127 (KSGSPNSSPGSGHNNVQKDGT) form a disordered region. Over residues 108-121 (SGSPNSSPGSGHNN) the composition is skewed to low complexity. Coiled coils occupy residues 216–541 (LNNV…ELKL), 580–663 (SKLE…LQQI), 696–762 (RNLQ…QSLD), and 789–827 (KKRIEDDLEVMSRKASSLRAKARESAVLEKLRHEVKEYR). The RING-type zinc finger occupies 832–871 (CGICHDRQKEVVITKCYHLFCNQCIQKSLGNRQRRCPSCS).

This sequence belongs to the BRE1 family.

It is found in the nucleus. The catalysed reaction is S-ubiquitinyl-[E2 ubiquitin-conjugating enzyme]-L-cysteine + [acceptor protein]-L-lysine = [E2 ubiquitin-conjugating enzyme]-L-cysteine + N(6)-ubiquitinyl-[acceptor protein]-L-lysine.. Its pathway is protein modification; protein ubiquitination. Its function is as follows. E3 ubiquitin-protein ligase that monoubiquitinates H2B to form H2BK143ub1. H2BK143ub1 gives a specific tag for epigenetic transcriptional activation and is also prerequisite for H3K4me and maybe H3K79me. It thereby plays a central role in histone code and gene regulation. Forms a ubiquitin ligase complex in cooperation with the E2 enzyme UBC2/RAD6. The protein is E3 ubiquitin-protein ligase BRE1-like 1 (BRE1A) of Oryza sativa subsp. indica (Rice).